The following is a 245-amino-acid chain: DNA repair protein RecO (245 aa).

Belongs to the RecO family.

Functionally, involved in DNA repair and RecF pathway recombination. This chain is DNA repair protein RecO, found in Bartonella bacilliformis (strain ATCC 35685 / KC583 / Herrer 020/F12,63).